Reading from the N-terminus, the 578-residue chain is Zinc finger protein 248 (578 aa).

In terms of domain architecture, KRAB spans 8-78 (VSFKDVCVDF…LEKGFPSQDP (71 aa)). The C2H2-type 1; degenerate zinc-finger motif lies at 239 to 263 (TVCKYNECGRTFIESLKLNISQRPH). Lys340 is covalently cross-linked (Glycyl lysine isopeptide (Lys-Gly) (interchain with G-Cter in SUMO2)). C2H2-type zinc fingers lie at residues 379 to 401 (FECG…QRTH), 407 to 429 (YECT…QRTH), 435 to 457 (YECK…QRTH), 463 to 485 (YECN…QRTH), 491 to 513 (FICN…QRTH), 519 to 542 (YKCN…RTHT), and 547 to 569 (YECN…QRIH).

The protein belongs to the krueppel C2H2-type zinc-finger protein family.

It is found in the nucleus. In terms of biological role, may be involved in transcriptional regulation. This chain is Zinc finger protein 248 (ZNF248), found in Pongo abelii (Sumatran orangutan).